The sequence spans 179 residues: Translation initiation factor IF-3 (179 aa).

The protein belongs to the IF-3 family. Monomer.

The protein resides in the cytoplasm. Functionally, IF-3 binds to the 30S ribosomal subunit and shifts the equilibrium between 70S ribosomes and their 50S and 30S subunits in favor of the free subunits, thus enhancing the availability of 30S subunits on which protein synthesis initiation begins. This chain is Translation initiation factor IF-3, found in Zymomonas mobilis subsp. mobilis (strain ATCC 31821 / ZM4 / CP4).